Here is a 686-residue protein sequence, read N- to C-terminus: CAI-1 autoinducer sensor kinase/phosphatase CqsS (686 aa).

6 helical membrane passes run 21–41 (LVGW…EYWF), 47–64 (NLGL…LVFR), 77–97 (GYFL…MMLM), 100–120 (WSTI…LLVH), 124–144 (VMAL…YGLT), and 152–172 (IEWQ…LCFF). The region spanning 191 to 416 (GIAHEMRNPL…EFVLSFPRYD (226 aa)) is the Histidine kinase domain. H194 bears the Phosphohistidine; by autocatalysis mark. Positions 569 to 686 (RILVVDDNQS…VLLNKVAAWV (118 aa)) constitute a Response regulatory domain. Residue D618 is modified to 4-aspartylphosphate.

The protein resides in the cell membrane. It catalyses the reaction ATP + protein L-histidine = ADP + protein N-phospho-L-histidine.. Senses the quorum-sensing autoinducer CAI-1 ((S)-3-hydroxytridecan-4-one) which probably functions as an intragenus signal. The sensory signal is then relayed to LuxU and LuxO. This Vibrio cholerae serotype O1 (strain ATCC 39315 / El Tor Inaba N16961) protein is CAI-1 autoinducer sensor kinase/phosphatase CqsS (cqsS).